Here is a 629-residue protein sequence, read N- to C-terminus: tRNA uridine 5-carboxymethylaminomethyl modification enzyme MnmG (629 aa).

Residues 13 to 18 (GGGHAG), Val-125, and Ser-180 each bind FAD. 273–287 (GPRYCPSIEDKIHRF) lines the NAD(+) pocket. Gln-370 contributes to the FAD binding site.

The protein belongs to the MnmG family. As to quaternary structure, homodimer. Heterotetramer of two MnmE and two MnmG subunits. FAD serves as cofactor.

It localises to the cytoplasm. Functionally, NAD-binding protein involved in the addition of a carboxymethylaminomethyl (cmnm) group at the wobble position (U34) of certain tRNAs, forming tRNA-cmnm(5)s(2)U34. This chain is tRNA uridine 5-carboxymethylaminomethyl modification enzyme MnmG, found in Shewanella sp. (strain MR-7).